The sequence spans 409 residues: MLRLITQSGDIVQELRRLHHRPVPSPWPVMAQVVAAMEHWAAMDQDAPPRVSGAELDAAYQRISQEKLSVIRQACAALEQVYRPQLPKTQVSFPEDGTVRGQRFYPVRRAGFYLEAKRGDALGNLLRQGMLAKTVGVAERVLVTETISSTILVAAQEMGIEEIYLAAGVPAIAMLTWGAKNIAPVESITGAGCPRVMAAKQLVSGVVTIDQTLARTNLMVLADGEANGQWLALDLLAHAEQYPNASAVLLTDRLELGEEVIQSVNRYCREQEHSVHTEKALAHYGLVAIVEDLEACGSWINEFCPHILLLAMEDPWTMVEKVQRAREIYIGHRSPSILGHYLSGANRLQTQDGAMATASELAFHCFLRSSQLLDYGNNPPPPWLKDLVNWQGLTAIEERLGQLGRLKES.

Belongs to the histidinol dehydrogenase family.

This Synechocystis sp. (strain ATCC 27184 / PCC 6803 / Kazusa) protein is Histidinol dehydrogenase homolog.